The chain runs to 480 residues: uncharacterized protein (480 aa).

Residues 131–207 (KKIIKIKNDV…KVVKVRFFIK (77 aa)) enclose the PUA domain.

It in the C-terminal section; belongs to the PAPS reductase family.

This is an uncharacterized protein from Methanocaldococcus jannaschii (strain ATCC 43067 / DSM 2661 / JAL-1 / JCM 10045 / NBRC 100440) (Methanococcus jannaschii).